A 153-amino-acid chain; its full sequence is Small ribosomal subunit protein bS16 (153 aa).

The segment at 114-153 (ENEPVGEAITPKKKKAKAEDAEAAADAPAEAAAESEAADK) is disordered. The segment covering 137–153 (AADAPAEAAAESEAADK) has biased composition (low complexity).

The protein belongs to the bacterial ribosomal protein bS16 family.

The polypeptide is Small ribosomal subunit protein bS16 (Rhodococcus jostii (strain RHA1)).